The chain runs to 398 residues: Stearoyl-[acyl-carrier-protein] 9-desaturase, chloroplastic (398 aa).

A chloroplast-targeting transit peptide spans 1 to 34; sequence MALKLHHTAFNPSMAVTSSGLPRSYHLRSHRVFM. The interval 46–66 is disordered; it reads IPNAKKPHMPPREAHVQKTHS. 6 residues coordinate Fe cation: Glu-140, Glu-178, His-181, Glu-231, Glu-264, and His-267.

It belongs to the fatty acid desaturase type 2 family. In terms of assembly, homodimer. Fe(2+) is required as a cofactor.

The protein localises to the plastid. It localises to the chloroplast. The catalysed reaction is octadecanoyl-[ACP] + 2 reduced [2Fe-2S]-[ferredoxin] + O2 + 2 H(+) = (9Z)-octadecenoyl-[ACP] + 2 oxidized [2Fe-2S]-[ferredoxin] + 2 H2O. It functions in the pathway lipid metabolism; fatty acid metabolism. Functionally, converts stearoyl-ACP to oleoyl-ACP by introduction of a cis double bond between carbons 9 and 10 of the acyl chain. This chain is Stearoyl-[acyl-carrier-protein] 9-desaturase, chloroplastic, found in Simmondsia chinensis (Jojoba).